The primary structure comprises 344 residues: F-box protein HRT3 (344 aa).

One copy of the TPR repeat lies at 14–47; sequence AIAIWEKGVLKEKDGSMSDAINFYRSALKIHDNV. The F-box domain maps to 98–148; sequence WILEILPDDILLRIIKKVILMSGESWVNLSMTCSTFSKLCFHDSVPFKTFA.

As to quaternary structure, interacts with SKP1. Component of the probable SCF(HRT3) complex containing CDC53, SKP1, RBX1 and HRT3.

Its pathway is protein modification; protein ubiquitination. Substrate recognition component of a SCF (SKP1-CUL1-F-box protein) E3 ubiquitin-protein ligase complex which mediates the ubiquitination and subsequent proteasomal degradation of target proteins. Probably recognizes and binds to phosphorylated target proteins. In Saccharomyces cerevisiae (strain ATCC 204508 / S288c) (Baker's yeast), this protein is F-box protein HRT3 (HRT3).